The following is a 159-amino-acid chain: Succinate dehydrogenase [ubiquinone] cytochrome b small subunit, mitochondrial (159 aa).

The transit peptide at 1-56 (MAVLWRLSAVCGAQGGRALLLRTPVVRPAHISAFLQDRPIPEWCGVQHIHLSPGHH) directs the protein to the mitochondrion. Topologically, residues 57-63 (SGSKAAS) are mitochondrial matrix. A helical membrane pass occupies residues 64–85 (LHWTSERVVSVLLLGLLPAAYL). Topologically, residues 86 to 90 (NPCSA) are mitochondrial intermembrane. The chain crosses the membrane as a helical span at residues 91 to 111 (MDYSLAATLTLHGHWGLGQVV). Histidine 102 serves as a coordination point for heme b. The Mitochondrial matrix segment spans residues 112-120 (TDYVHGDAS). A ubiquinone is bound at residue tyrosine 114. Residues 121–142 (QKAAKAGLLALSALTFAGLCYF) form a helical membrane-spanning segment. Topologically, residues 143–159 (NYHDVGICKAVAMLWKL) are mitochondrial intermembrane.

Belongs to the CybS family. Component of complex II composed of four subunits: the flavoprotein (FP) SDHA, iron-sulfur protein (IP) SDHB, and a cytochrome b560 composed of SDHC and SDHD.

The protein resides in the mitochondrion inner membrane. It participates in carbohydrate metabolism; tricarboxylic acid cycle. Its function is as follows. Membrane-anchoring subunit of succinate dehydrogenase (SDH) that is involved in complex II of the mitochondrial electron transport chain and is responsible for transferring electrons from succinate to ubiquinone (coenzyme Q). SDH also oxidizes malate to the non-canonical enol form of oxaloacetate, enol-oxaloacetate. Enol-oxaloacetate, which is a potent inhibitor of the succinate dehydrogenase activity, is further isomerized into keto-oxaloacetate. The protein is Succinate dehydrogenase [ubiquinone] cytochrome b small subunit, mitochondrial (SDHD) of Pongo abelii (Sumatran orangutan).